Consider the following 813-residue polypeptide: MKMASQRFCLRWNNHQSNLLSVFDQLLHAETFTDVTLAVEGQHLKAHKMVLSACSPYFNTLFVSHPEKHPIVILKDVPYSDMKSLLDFMYRGEVSVDQERLTAFLRVAESLRIKGLTEVNDDKPSPAAAAAGAGATGSESTATTPQLQRIQPYLVPQRNRSQAGGLLASAANAGNTPTLPVQPSLLSSALMPKRKRGRPRKLSGSSNGTGNDYDDFDRENMMNDSSDLGNGKMCNESYSGNDDGSDDNQPNAGHTDDLNESRDSLPSKRSKNSKDHRVVSHHEDNSTSVTPTKATPELSQRLFGSSSTTISATAPGGSSTGPSETISLLEISDERESAPVHLPTILGLKIRAINTTTPAQQGSPQTPTKSKPKIRQATGSNNSNSLLKQQLRGGAKDPEVPPATRITGAVTPNAALNAEEQSKEMPKKNQDEVNACIGLHSLANAAEQQAAQVASTGNLHHQLLLHMAANNSMLNTTDYYQQQQQESPSSAGQFMDDDLELLSLNDQQDKSDEPDHEMVTLADENAGLPGYQGNEAEATPAQEDSPAAETATAPPPAPRSGKKGAKRPIQRRRVRRKAQSTLDDQAEHLTEMSVRGLDLFRYASVVEGVYRCTECAKENMQKTFKNKYSFQRHAFLYHEGKHRKVFPCPVCSKEFSRPDKMKNHLKMTHENFTPPKDIGAFSPLKYLISAAAAGDMHATIYQQQQDHYHRQLAEQLEQQNASFDSRDSSLILPDVKMEHAEDQDAEQEAELSDGGYDASNPAAAAAAMLSLQQDVIIKDEIQISPSPSPTPPASCAVAEGKSLALASTAQTAT.

Positions 33 to 98 (TDVTLAVEGQ…MYRGEVSVDQ (66 aa)) constitute a BTB domain. Disordered stretches follow at residues 118-148 (EVND…PQLQ), 171-324 (ANAG…GPSE), 356-428 (TTPA…MPKK), and 526-585 (AGLP…LDDQ). Over residues 125-145 (SPAAAAAGAGATGSESTATTP) the composition is skewed to low complexity. Over residues 176–187 (TPTLPVQPSLLS) the composition is skewed to polar residues. The span at 192 to 201 (PKRKRGRPRK) shows a compositional bias: basic residues. 3 positions are modified to phosphoserine: Ser-203, Ser-205, and Ser-206. Position 209 is a phosphothreonine (Thr-209). A compositionally biased stretch (basic and acidic residues) spans 254–285 (HTDDLNESRDSLPSKRSKNSKDHRVVSHHEDN). Composition is skewed to polar residues over residues 302–324 (LFGS…GPSE), 356–369 (TTPA…TPTK), and 377–388 (ATGSNNSNSLLK). Over residues 560 to 578 (SGKKGAKRPIQRRRVRRKA) the composition is skewed to basic residues. C2H2-type zinc fingers lie at residues 610 to 638 (YRCT…FLYH) and 646 to 669 (FPCP…KMTH). Ser-682 carries the post-translational modification Phosphoserine.

As to quaternary structure, interacts with CoRest/CG33525, suggesting that it acts by recruiting a CoRest-containing corepressor complex. Interacts with phyl.

The protein resides in the nucleus. Binds to a number of sites in the transcriptional regulatory region of ftz. Isoform alpha is required to repress genes that promote the R7 cell fate. Probable repressor of the transcription of the segmentation genes ftz, eve, h, odd, run, and en. May bind to the region 5'-AGGG[CT]GG-3'. Degradation of ttk is directed by binding of sinah or sina, via the adapter molecule phyl which binds to the BTB domain of ttk. In Drosophila melanogaster (Fruit fly), this protein is Protein tramtrack, alpha isoform (ttk).